Consider the following 193-residue polypeptide: MAAVLNLQLKVDASLKAFLGAENRPLHGKTGATLEQILESIFANIAIQGTSEQTEFLDLVVEVKSMEDQSVLGSYNLKEVVNLIKAFKTTSSDPNINKMTFRQVCEAFAPEARNGLVKLKYKGVFTNLFTTMPEVGSKYPELMFDFNKGLNMFIMNKAQQKVITNMNRRLLQTEFAKSENEAKLSSVSTDLCI.

In terms of processing, the N-terminus is blocked.

It is found in the virion. This chain is Capsid protein, found in Crataegus (hawthorn).